Consider the following 369-residue polypeptide: Glutamate 5-kinase (369 aa).

K9 is an ATP binding site. Substrate is bound by residues S49, D136, and N148. ATP-binding positions include 168–169 and 210–216; these read TD and TGGMLTK. The region spanning 275 to 355 is the PUA domain; that stretch reads QGSIWVDKGA…KGVLIYRDDW (81 aa).

This sequence belongs to the glutamate 5-kinase family.

Its subcellular location is the cytoplasm. It catalyses the reaction L-glutamate + ATP = L-glutamyl 5-phosphate + ADP. Its pathway is amino-acid biosynthesis; L-proline biosynthesis; L-glutamate 5-semialdehyde from L-glutamate: step 1/2. Its function is as follows. Catalyzes the transfer of a phosphate group to glutamate to form L-glutamate 5-phosphate. The protein is Glutamate 5-kinase of Streptococcus pneumoniae serotype 2 (strain D39 / NCTC 7466).